Here is a 184-residue protein sequence, read N- to C-terminus: Ribosome maturation factor RimM (184 aa).

Residues 101 to 180 enclose the PRC barrel domain; the sequence is DGEFFYCDLV…KITTNNAKTL (80 aa).

The protein belongs to the RimM family. In terms of assembly, binds ribosomal protein uS19.

The protein localises to the cytoplasm. Its function is as follows. An accessory protein needed during the final step in the assembly of 30S ribosomal subunit, possibly for assembly of the head region. Essential for efficient processing of 16S rRNA. May be needed both before and after RbfA during the maturation of 16S rRNA. It has affinity for free ribosomal 30S subunits but not for 70S ribosomes. This Helicobacter pylori (strain Shi470) protein is Ribosome maturation factor RimM.